A 361-amino-acid chain; its full sequence is Uroporphyrinogen decarboxylase (361 aa).

Substrate contacts are provided by residues 27 to 31 (RQAGR), D77, Y154, T209, and H327.

This sequence belongs to the uroporphyrinogen decarboxylase family. Homodimer.

The protein resides in the cytoplasm. It carries out the reaction uroporphyrinogen III + 4 H(+) = coproporphyrinogen III + 4 CO2. It participates in porphyrin-containing compound metabolism; protoporphyrin-IX biosynthesis; coproporphyrinogen-III from 5-aminolevulinate: step 4/4. Catalyzes the decarboxylation of four acetate groups of uroporphyrinogen-III to yield coproporphyrinogen-III. The polypeptide is Uroporphyrinogen decarboxylase (Coxiella burnetii (strain RSA 331 / Henzerling II)).